The primary structure comprises 224 residues: MINQKKIAGEKACEWIKDGMVVGLGTGSTVYYTIEKLGEMVNNGLHITGVATSEETSKQAQNLGIPLKSLNDVAEIDITIDGADEIDTDFQGIKGGGGALLREKMVASASLKNIWVVSEEKLVRNLGKFPLPIEVIPFGWKQIERTLEKEHIQTILRRQSSGEIYVTNNGNYILDIVNQTFRDAEMWQEKLAQIPGIVEHGLFLHYVDIIVCAKANGEIELIKK.

Substrate is bound by residues 26-29, 81-84, and 94-97; these read TGST, DGAD, and KGGG. The active-site Proton acceptor is the Glu-103. Lys-121 is a binding site for substrate.

Belongs to the ribose 5-phosphate isomerase family. Homodimer.

The enzyme catalyses aldehydo-D-ribose 5-phosphate = D-ribulose 5-phosphate. It functions in the pathway carbohydrate degradation; pentose phosphate pathway; D-ribose 5-phosphate from D-ribulose 5-phosphate (non-oxidative stage): step 1/1. Its function is as follows. Catalyzes the reversible conversion of ribose-5-phosphate to ribulose 5-phosphate. This is Ribose-5-phosphate isomerase A from Listeria monocytogenes serotype 4b (strain F2365).